Consider the following 393-residue polypeptide: Mitogen-activated protein kinase SIPK (393 aa).

A compositionally biased stretch (polar residues) spans 1-11 (MDGSGQQTDTM). Residues 1 to 31 (MDGSGQQTDTMMSDAGAEQPPPAPQPVAGMD) are disordered. The Protein kinase domain maps to 60–345 (KPPILPIGKG…VEGALAHPYL (286 aa)). ATP-binding positions include 66-74 (IGKGAYGIV) and lysine 89. Aspartate 186 acts as the Proton acceptor in catalysis. The short motif at 218 to 220 (TEY) is the TXY element.

The protein belongs to the protein kinase superfamily. CMGC Ser/Thr protein kinase family. MAP kinase subfamily. Interacts with SIPKK.

It carries out the reaction L-tyrosyl-[protein] + ATP = O-phospho-L-tyrosyl-[protein] + ADP + H(+). The enzyme catalyses L-seryl-[protein] + ATP = O-phospho-L-seryl-[protein] + ADP + H(+). It catalyses the reaction L-threonyl-[protein] + ATP = O-phospho-L-threonyl-[protein] + ADP + H(+). Activated by threonine and tyrosine phosphorylation. In terms of biological role, phosphorylates myelin basic protein (MBP) in vitro. May be involved in disease resistance. This is Mitogen-activated protein kinase SIPK from Nicotiana tabacum (Common tobacco).